The following is a 693-amino-acid chain: eEF1A lysine and N-terminal methyltransferase (693 aa).

Belongs to the methyltransferase superfamily.

The enzyme catalyses L-lysyl-[protein] + S-adenosyl-L-methionine = N(6)-methyl-L-lysyl-[protein] + S-adenosyl-L-homocysteine + H(+). The catalysed reaction is N(6)-methyl-L-lysyl-[protein] + S-adenosyl-L-methionine = N(6),N(6)-dimethyl-L-lysyl-[protein] + S-adenosyl-L-homocysteine + H(+). It carries out the reaction N-terminal glycyl-L-lysyl-L-glutamyl-[protein] + 3 S-adenosyl-L-methionine = N-terminal N,N,N-trimethyl-glycyl-L-lysyl-L-glutamyl-[protein] + 3 S-adenosyl-L-homocysteine + 3 H(+). In terms of biological role, dual methyltransferase that catalyzes methylation of elongation factor 1-alpha (eef1a1 and eef1a2) at two different positions, and is therefore involved in the regulation of mRNA translation. Via its C-terminus, methylates the N-terminus of eef1a1 and eef1a2. Via its N-terminus dimethylates lysine residues of eef1a1 and eef1a2. The sequence is that of eEF1A lysine and N-terminal methyltransferase (mettl13) from Xenopus laevis (African clawed frog).